Consider the following 531-residue polypeptide: Polygalacturonase (531 aa).

The first 23 residues, 1–23 (MILSHRYTLIALAAAILSSGAHA), serve as a signal peptide directing secretion. The Proton donor role is filled by D307. H333 is an active-site residue. A required for PGA export across the outer membrane and catalytic activity region spans residues 518–531 (AFVPLKSVAPTSPI).

It belongs to the glycosyl hydrolase 28 family. Monomer.

It localises to the secreted. It catalyses the reaction (1,4-alpha-D-galacturonosyl)n+m + H2O = (1,4-alpha-D-galacturonosyl)n + (1,4-alpha-D-galacturonosyl)m.. Functionally, contributes to the wilt disease production on tomato. This Ralstonia nicotianae (strain ATCC BAA-1114 / GMI1000) (Ralstonia solanacearum) protein is Polygalacturonase (pglA).